The sequence spans 350 residues: Histidinol-phosphate aminotransferase (350 aa).

N6-(pyridoxal phosphate)lysine is present on lysine 212.

The protein belongs to the class-II pyridoxal-phosphate-dependent aminotransferase family. Histidinol-phosphate aminotransferase subfamily. Homodimer. It depends on pyridoxal 5'-phosphate as a cofactor.

The enzyme catalyses L-histidinol phosphate + 2-oxoglutarate = 3-(imidazol-4-yl)-2-oxopropyl phosphate + L-glutamate. It participates in amino-acid biosynthesis; L-histidine biosynthesis; L-histidine from 5-phospho-alpha-D-ribose 1-diphosphate: step 7/9. This is Histidinol-phosphate aminotransferase from Geobacter sulfurreducens (strain ATCC 51573 / DSM 12127 / PCA).